Consider the following 334-residue polypeptide: Probable type II restriction enzyme HindVP (334 aa).

It carries out the reaction Endonucleolytic cleavage of DNA to give specific double-stranded fragments with terminal 5'-phosphates.. Its function is as follows. A P subtype restriction enzyme that recognizes the double-stranded sequence 5'-GRCGYC-3'; the cleavage site is unknown. This chain is Probable type II restriction enzyme HindVP (hindVRP), found in Haemophilus influenzae (strain ATCC 51907 / DSM 11121 / KW20 / Rd).